Here is a 163-residue protein sequence, read N- to C-terminus: Nucleotide-binding protein Clos_1967 (163 aa).

This sequence belongs to the YajQ family.

Functionally, nucleotide-binding protein. The protein is Nucleotide-binding protein Clos_1967 of Alkaliphilus oremlandii (strain OhILAs) (Clostridium oremlandii (strain OhILAs)).